The chain runs to 987 residues: Leucine--tRNA ligase (987 aa).

The 'HIGH' region motif lies at 69–80 (PYPSGKGLHVGH). Residues 760–764 (KMGKS) carry the 'KMSKS' region motif. Lys-763 provides a ligand contact to ATP.

It belongs to the class-I aminoacyl-tRNA synthetase family.

The protein localises to the cytoplasm. It carries out the reaction tRNA(Leu) + L-leucine + ATP = L-leucyl-tRNA(Leu) + AMP + diphosphate. The sequence is that of Leucine--tRNA ligase from Bifidobacterium longum (strain DJO10A).